Here is a 242-residue protein sequence, read N- to C-terminus: Probable septum site-determining protein MinC (242 aa).

It belongs to the MinC family. Interacts with MinD and FtsZ.

Functionally, cell division inhibitor that blocks the formation of polar Z ring septums. Rapidly oscillates between the poles of the cell to destabilize FtsZ filaments that have formed before they mature into polar Z rings. Prevents FtsZ polymerization. The chain is Probable septum site-determining protein MinC from Brucella anthropi (strain ATCC 49188 / DSM 6882 / CCUG 24695 / JCM 21032 / LMG 3331 / NBRC 15819 / NCTC 12168 / Alc 37) (Ochrobactrum anthropi).